The following is a 407-amino-acid chain: Substance-P receptor (407 aa).

The Extracellular segment spans residues 1-31 (MDNVLPMDSDLFPNISTNTSESNQFVQPTWQ). Asparagine 14 and asparagine 18 each carry an N-linked (GlcNAc...) asparagine glycan. Residues 32-54 (IVLWAAAYTVIVVTSVVGNVVVI) form a helical membrane-spanning segment. Over 55 to 64 (WIILAHKRMR) the chain is Cytoplasmic. A helical transmembrane segment spans residues 65–86 (TVTNYFLVNLAFAEACMAAFNT). At 87 to 106 (VVNFTYAVHNVWYYGLFYCK) the chain is on the extracellular side. The cysteines at positions 105 and 180 are disulfide-linked. Residues 107 to 128 (FHNFFPIAALFASIYSMTAVAF) traverse the membrane as a helical segment. Over 129-148 (DRYMAIIHPLQPRLSATATK) the chain is Cytoplasmic. The chain crosses the membrane as a helical span at residues 149–169 (VVIFVIWVLALLLAFPQGYYS). Residues 170–194 (TTETMPSRVVCMIEWPEHPNRTYEK) lie on the Extracellular side of the membrane. A helical transmembrane segment spans residues 195–219 (AYHICVTVLIYFLPLLVIGYAYTVV). Residues 220-248 (GITLWASEIPGDSSDRYHEQVSAKRKVVK) lie on the Cytoplasmic side of the membrane. Residues 249–270 (MMIVVVCTFAICWLPFHVFFLL) form a helical membrane-spanning segment. Residues 271 to 283 (PYINPDLYLKKFI) are Extracellular-facing. The chain crosses the membrane as a helical span at residues 284–308 (QQVYLASMWLAMSSTMYNPIIYCCL). Over 309-407 (NDRFRLGFKH…SSSFYSNMLA (99 aa)) the chain is Cytoplasmic. Residue cysteine 322 is the site of S-palmitoyl cysteine attachment. The segment at 362-407 (VGAHEEEPEEGPKATPSSLDLTSNGSSRSNSKTMTESSSFYSNMLA) is disordered. Polar residues predominate over residues 376 to 407 (TPSSLDLTSNGSSRSNSKTMTESSSFYSNMLA).

It belongs to the G-protein coupled receptor 1 family. As to quaternary structure, interacts with ARRB1.

The protein localises to the cell membrane. In terms of biological role, this is a receptor for the tachykinin neuropeptide substance P. It is probably associated with G proteins that activate a phosphatidylinositol-calcium second messenger system. The rank order of affinity of this receptor to tachykinins is: substance P &gt; substance K &gt; neuromedin-K. The polypeptide is Substance-P receptor (Tacr1) (Rattus norvegicus (Rat)).